The following is a 436-amino-acid chain: MTTEPLEDPEANSNFVHGLPEASLGNKADENSEDLPGPSEGLDPLPDEVPPEDIVEARAEEDVDQASEANIIATEQDEEQASMQIATSMGQNKDRASMQTDTSTGRDAEPATSMTTSTSGVKEEIPGTPNPSQENLEELTSLLPQDPGILQMFVGFQNPVWDRLAENNRTSRSRTVSPSDSQTQEKTSGKSTVSEGQLEIASNADVPSVLPEDVQTSAGATDPPPSDTTGPEPEPTKSADQEAEDFKALNPESKVRSPKSTSEDLAADSGTPQAPPSPNSPADSPPPSPDSYQVSLGRSRLDPSLYGPEVENDYMRSMTSLLCGGEGSISSLTDILVWSDTATRMGVAMGILASGRSSPADRLQDEGPRLRTVASLFRSARSAFSSGVMAGTSSVLRSVTHLLESVERHTMEGIRSTMRYLNHFTLRWARTGSNSD.

Acidic residues-rich tracts occupy residues 1-10 (MTTEPLEDPE) and 45-54 (LPDEVPPEDI). Disordered stretches follow at residues 1–142 (MTTE…LTSL) and 165–307 (AENN…SLYG). Composition is skewed to polar residues over residues 81–103 (ASMQIATSMGQNKDRASMQTDTS) and 167–195 (NNRTSRSRTVSPSDSQTQEKTSGKSTVSE). Positions 234–247 (EPTKSADQEAEDFK) are enriched in basic and acidic residues. Pro residues predominate over residues 273-289 (QAPPSPNSPADSPPPSP). A Phosphoserine modification is found at Ser375.

The protein localises to the cytoplasm. This Rattus norvegicus (Rat) protein is Testis-expressed protein 44 (Tex44).